The sequence spans 210 residues: Prolactin (210 aa).

An N-terminal signal peptide occupies residues 1–23 (MAEGSRLYFAVTVLMCAFVSING). 2 disulfides stabilise this stretch: Cys-69–Cys-183 and Cys-200–Cys-210.

It belongs to the somatotropin/prolactin family. In terms of tissue distribution, pituitary gland.

Its subcellular location is the secreted. This is Prolactin (prl) from Hypophthalmichthys nobilis (Bighead carp).